We begin with the raw amino-acid sequence, 353 residues long: N-acetyl-gamma-glutamyl-phosphate reductase (353 aa).

Cysteine 155 is an active-site residue.

Belongs to the NAGSA dehydrogenase family. Type 1 subfamily.

It localises to the cytoplasm. The enzyme catalyses N-acetyl-L-glutamate 5-semialdehyde + phosphate + NADP(+) = N-acetyl-L-glutamyl 5-phosphate + NADPH + H(+). The protein operates within amino-acid biosynthesis; L-arginine biosynthesis; N(2)-acetyl-L-ornithine from L-glutamate: step 3/4. Its function is as follows. Catalyzes the NADPH-dependent reduction of N-acetyl-5-glutamyl phosphate to yield N-acetyl-L-glutamate 5-semialdehyde. The polypeptide is N-acetyl-gamma-glutamyl-phosphate reductase (Microcystis aeruginosa (strain NIES-843 / IAM M-2473)).